Here is a 152-residue protein sequence, read N- to C-terminus: Xanthine-guanine phosphoribosyltransferase (152 aa).

Residues R37 to G38, R69, and D88 to T96 each bind 5-phospho-alpha-D-ribose 1-diphosphate. R69 serves as a coordination point for GMP. D89 contributes to the Mg(2+) binding site. The guanine site is built by D92 and I135. D92 and I135 together coordinate xanthine. Residues D92–T96 and W134–I135 each bind GMP.

It belongs to the purine/pyrimidine phosphoribosyltransferase family. XGPT subfamily. As to quaternary structure, homotetramer. Mg(2+) serves as cofactor.

It is found in the cell inner membrane. The enzyme catalyses GMP + diphosphate = guanine + 5-phospho-alpha-D-ribose 1-diphosphate. It catalyses the reaction XMP + diphosphate = xanthine + 5-phospho-alpha-D-ribose 1-diphosphate. The catalysed reaction is IMP + diphosphate = hypoxanthine + 5-phospho-alpha-D-ribose 1-diphosphate. It participates in purine metabolism; GMP biosynthesis via salvage pathway; GMP from guanine: step 1/1. Its pathway is purine metabolism; XMP biosynthesis via salvage pathway; XMP from xanthine: step 1/1. Its function is as follows. Purine salvage pathway enzyme that catalyzes the transfer of the ribosyl-5-phosphate group from 5-phospho-alpha-D-ribose 1-diphosphate (PRPP) to the N9 position of the 6-oxopurines guanine and xanthine to form the corresponding ribonucleotides GMP (guanosine 5'-monophosphate) and XMP (xanthosine 5'-monophosphate), with the release of PPi. To a lesser extent, also acts on hypoxanthine. The sequence is that of Xanthine-guanine phosphoribosyltransferase from Citrobacter koseri (strain ATCC BAA-895 / CDC 4225-83 / SGSC4696).